The chain runs to 375 residues: Alcohol dehydrogenase 1 (375 aa).

A1 is subject to N-acetylalanine. Zn(2+) is bound by residues C46, H68, C98, C101, C104, C112, and C175. Residues 200-205 (GLGGVG), D224, K229, 293-295 (VGL), and R370 each bind NAD(+).

This sequence belongs to the zinc-containing alcohol dehydrogenase family. Class-I subfamily. The cofactor is Zn(2+).

The protein resides in the cytoplasm. It catalyses the reaction a primary alcohol + NAD(+) = an aldehyde + NADH + H(+). The catalysed reaction is a secondary alcohol + NAD(+) = a ketone + NADH + H(+). In Pelophylax perezi (Perez's frog), this protein is Alcohol dehydrogenase 1.